The following is a 291-amino-acid chain: 33 kDa chaperonin (291 aa).

Intrachain disulfides connect Cys-229/Cys-231 and Cys-262/Cys-265.

The protein belongs to the HSP33 family. Post-translationally, under oxidizing conditions two disulfide bonds are formed involving the reactive cysteines. Under reducing conditions zinc is bound to the reactive cysteines and the protein is inactive.

The protein localises to the cytoplasm. Redox regulated molecular chaperone. Protects both thermally unfolding and oxidatively damaged proteins from irreversible aggregation. Plays an important role in the bacterial defense system toward oxidative stress. This is 33 kDa chaperonin from Aliivibrio fischeri (strain ATCC 700601 / ES114) (Vibrio fischeri).